The sequence spans 235 residues: UPF0502 protein Bmul_3231/BMULJ_05293 (235 aa).

The protein belongs to the UPF0502 family.

The sequence is that of UPF0502 protein Bmul_3231/BMULJ_05293 from Burkholderia multivorans (strain ATCC 17616 / 249).